The sequence spans 245 residues: 1-(5-phosphoribosyl)-5-[(5-phosphoribosylamino)methylideneamino] imidazole-4-carboxamide isomerase (245 aa).

Catalysis depends on Asp-8, which acts as the Proton acceptor. Catalysis depends on Asp-129, which acts as the Proton donor.

This sequence belongs to the HisA/HisF family.

The protein resides in the cytoplasm. It carries out the reaction 1-(5-phospho-beta-D-ribosyl)-5-[(5-phospho-beta-D-ribosylamino)methylideneamino]imidazole-4-carboxamide = 5-[(5-phospho-1-deoxy-D-ribulos-1-ylimino)methylamino]-1-(5-phospho-beta-D-ribosyl)imidazole-4-carboxamide. Its pathway is amino-acid biosynthesis; L-histidine biosynthesis; L-histidine from 5-phospho-alpha-D-ribose 1-diphosphate: step 4/9. This Geotalea daltonii (strain DSM 22248 / JCM 15807 / FRC-32) (Geobacter daltonii) protein is 1-(5-phosphoribosyl)-5-[(5-phosphoribosylamino)methylideneamino] imidazole-4-carboxamide isomerase.